The following is a 389-amino-acid chain: Sulfate adenylyltransferase (389 aa).

Belongs to the sulfate adenylyltransferase family.

It catalyses the reaction sulfate + ATP + H(+) = adenosine 5'-phosphosulfate + diphosphate. It participates in sulfur metabolism; hydrogen sulfide biosynthesis; sulfite from sulfate: step 1/3. This chain is Sulfate adenylyltransferase, found in Desulforamulus reducens (strain ATCC BAA-1160 / DSM 100696 / MI-1) (Desulfotomaculum reducens).